Reading from the N-terminus, the 346-residue chain is Histidinol-phosphate aminotransferase (346 aa).

Lys-209 bears the N6-(pyridoxal phosphate)lysine mark.

Belongs to the class-II pyridoxal-phosphate-dependent aminotransferase family. Histidinol-phosphate aminotransferase subfamily. As to quaternary structure, homodimer. The cofactor is pyridoxal 5'-phosphate.

It catalyses the reaction L-histidinol phosphate + 2-oxoglutarate = 3-(imidazol-4-yl)-2-oxopropyl phosphate + L-glutamate. The protein operates within amino-acid biosynthesis; L-histidine biosynthesis; L-histidine from 5-phospho-alpha-D-ribose 1-diphosphate: step 7/9. In Vibrio vulnificus (strain YJ016), this protein is Histidinol-phosphate aminotransferase.